A 564-amino-acid polypeptide reads, in one-letter code: uncharacterized protein (564 aa).

Residues Met-1–Ser-21 form the signal peptide. The N-palmitoyl cysteine moiety is linked to residue Cys-22. A lipid anchor (S-diacylglycerol cysteine) is attached at Cys-22.

It is found in the cell membrane. This is an uncharacterized protein from Aquifex aeolicus (strain VF5).